A 358-amino-acid chain; its full sequence is UDP-N-acetylglucosamine--N-acetylmuramyl-(pentapeptide) pyrophosphoryl-undecaprenol N-acetylglucosamine transferase (358 aa).

UDP-N-acetyl-alpha-D-glucosamine-binding positions include 11–13 (TAG), asparagine 125, arginine 162, serine 196, and glutamine 288.

The protein belongs to the glycosyltransferase 28 family. MurG subfamily.

It is found in the cell membrane. It catalyses the reaction di-trans,octa-cis-undecaprenyl diphospho-N-acetyl-alpha-D-muramoyl-L-alanyl-D-glutamyl-meso-2,6-diaminopimeloyl-D-alanyl-D-alanine + UDP-N-acetyl-alpha-D-glucosamine = di-trans,octa-cis-undecaprenyl diphospho-[N-acetyl-alpha-D-glucosaminyl-(1-&gt;4)]-N-acetyl-alpha-D-muramoyl-L-alanyl-D-glutamyl-meso-2,6-diaminopimeloyl-D-alanyl-D-alanine + UDP + H(+). It participates in cell wall biogenesis; peptidoglycan biosynthesis. Cell wall formation. Catalyzes the transfer of a GlcNAc subunit on undecaprenyl-pyrophosphoryl-MurNAc-pentapeptide (lipid intermediate I) to form undecaprenyl-pyrophosphoryl-MurNAc-(pentapeptide)GlcNAc (lipid intermediate II). This Leifsonia xyli subsp. xyli (strain CTCB07) protein is UDP-N-acetylglucosamine--N-acetylmuramyl-(pentapeptide) pyrophosphoryl-undecaprenol N-acetylglucosamine transferase.